The following is a 1022-amino-acid chain: Translation initiation factor IF-2 (1022 aa).

Over residues glutamate 82–leucine 94 the composition is skewed to basic and acidic residues. 2 disordered regions span residues glutamate 82–alanine 129 and serine 342–leucine 436. Residues alanine 104–alanine 115 are compositionally biased toward low complexity. Basic residues predominate over residues lysine 375–lysine 384. Basic and acidic residues predominate over residues serine 421–leucine 436. The region spanning threonine 519–lysine 689 is the tr-type G domain. Residues glycine 528–threonine 535 form a G1 region. Residue glycine 528–threonine 535 participates in GTP binding. The G2 stretch occupies residues glycine 553–histidine 557. The tract at residues aspartate 575–glycine 578 is G3. GTP contacts are provided by residues aspartate 575 to histidine 579 and asparagine 629 to aspartate 632. Residues asparagine 629–aspartate 632 form a G4 region. Positions serine 665–lysine 667 are G5.

It belongs to the TRAFAC class translation factor GTPase superfamily. Classic translation factor GTPase family. IF-2 subfamily.

The protein localises to the cytoplasm. One of the essential components for the initiation of protein synthesis. Protects formylmethionyl-tRNA from spontaneous hydrolysis and promotes its binding to the 30S ribosomal subunits. Also involved in the hydrolysis of GTP during the formation of the 70S ribosomal complex. The chain is Translation initiation factor IF-2 from Chlorobium chlorochromatii (strain CaD3).